Reading from the N-terminus, the 327-residue chain is GTPase Obg (327 aa).

The Obg domain occupies 2–160 (HLFKDSLNLI…LNLRLELSLI (159 aa)). Residues 161-326 (ADIGLVGLPN…LVSEFFSLVK (166 aa)) enclose the OBG-type G domain. Residues 167 to 174 (GLPNAGKS), 192 to 196 (FTTKI), 213 to 216 (DLPG), 280 to 283 (SKLD), and 307 to 309 (SIY) each bind GTP. 2 residues coordinate Mg(2+): serine 174 and threonine 194.

The protein belongs to the TRAFAC class OBG-HflX-like GTPase superfamily. OBG GTPase family. Monomer. It depends on Mg(2+) as a cofactor.

Its subcellular location is the cytoplasm. Functionally, an essential GTPase which binds GTP, GDP and possibly (p)ppGpp with moderate affinity, with high nucleotide exchange rates and a fairly low GTP hydrolysis rate. Plays a role in control of the cell cycle, stress response, ribosome biogenesis and in those bacteria that undergo differentiation, in morphogenesis control. This Borrelia duttonii (strain Ly) protein is GTPase Obg.